The primary structure comprises 419 residues: Delta(8)-fatty-acid desaturase (419 aa).

The Cytochrome b5 heme-binding domain maps to 1 to 64 (MKSKRQALSP…LKRMPKINPS (64 aa)). Positions 24 and 47 each coordinate heme. The chain crosses the membrane as a helical span at residues 110-130 (LGVLGYFLMVQYQMYFIGAVL). Residues 143 to 147 (HDICH) carry the Histidine box-1 motif. A helical transmembrane segment spans residues 156 to 176 (WNNLVGLVFGNGLQGFSVTCW). The Histidine box-2 signature appears at 180 to 184 (HNAHH). Transmembrane regions (helical) follow at residues 226 to 246 (YFLVICILLRFIWCFQCVLTV), 266 to 286 (IGLALHWTLKALFHLFFMPSI), and 290 to 310 (LLVFFVSELVGGFGIAIVVFM). A Histidine box-3 motif is present at residues 355-359 (QIEHH).

Belongs to the fatty acid desaturase type 1 family. Fe cation is required as a cofactor.

The protein resides in the membrane. It carries out the reaction an (11Z,14Z)-icosadienoyl-containing glycerolipid + 2 Fe(II)-[cytochrome b5] + O2 + 2 H(+) = an (8Z,11Z,14Z)-icosatrienoyl-containing glycerolipid + 2 Fe(III)-[cytochrome b5] + 2 H2O. The enzyme catalyses an (11Z,14Z,17Z)-icosatrienoyl-containing glycerolipid + 2 Fe(II)-[cytochrome b5] + O2 + 2 H(+) = an (8Z,11Z,14Z,17Z)-eicosatetraenoyl-containing glycerolipid + 2 Fe(III)-[cytochrome b5] + 2 H2O. It catalyses the reaction an (11Z)-eicosenoyl-containing glycerolipid + 2 Fe(II)-[cytochrome b5] + O2 + 2 H(+) = a (8Z,11Z)-eicosadienoyl-containing glycerolipid + 2 Fe(III)-[cytochrome b5] + 2 H2O. It functions in the pathway lipid metabolism; fatty acid metabolism. In terms of biological role, delta(8)-fatty-acid desaturase which introduces a double bond at the 8-position in 20-carbon chain length fatty acids (C20) that have an existing delta-11 unsaturation (double bond). Whether it acts on CoA-linked substrates (as in animals) or phospholipid-linked substrates (as in plants and fungi) is still not clear. In Euglena gracilis, this protein is Delta(8)-fatty-acid desaturase (efd1).